Here is an 88-residue protein sequence, read N- to C-terminus: Period circadian protein (88 aa).

Residues 23–88 form a disordered region; that stretch reads VTNTSIAGTG…VTLTESLLNK (66 aa). 16 consecutive repeat copies span residues 30–31, 33–34, 35–36, 37–38, 39–40, 41–42, 43–44, 45–46, 47–48, 49–50, 51–52, 53–54, 55–56, 57–58, 59–60, and 61–62. The interval 30–62 is 16 X 2 AA tandem repeats of G-[TN]; it reads GTGGTGTGTGTGTGTGTGTGTGTGTGTGTGTGN. The span at 30–62 shows a compositional bias: gly residues; the sequence is GTGGTGTGTGTGTGTGTGTGTGTGTGTGTGTGN. A compositionally biased stretch (polar residues) spans 79-88; sequence VTLTESLLNK.

In terms of assembly, forms a heterodimer with timeless (TIM); the complex then translocates into the nucleus. Phosphorylated with a circadian rhythmicity, probably by the double-time protein (dbt). Phosphorylation could be implicated in the stability of per monomer and in the formation of heterodimer per-tim.

The protein localises to the nucleus. Its subcellular location is the cytoplasm. It localises to the perinuclear region. Functionally, essential for biological clock functions. Determines the period length of circadian and ultradian rhythms; an increase in PER dosage leads to shortened circadian rhythms and a decrease leads to lengthened circadian rhythms. Essential for the circadian rhythmicity of locomotor activity, eclosion behavior, and for the rhythmic component of the male courtship song that originates in the thoracic nervous system. The biological cycle depends on the rhythmic formation and nuclear localization of the TIM-PER complex. Light induces the degradation of TIM, which promotes elimination of PER. Nuclear activity of the heterodimer coordinatively regulates PER and TIM transcription through a negative feedback loop. Behaves as a negative element in circadian transcriptional loop. Does not appear to bind DNA, suggesting indirect transcriptional inhibition. The sequence is that of Period circadian protein (per) from Drosophila teissieri (Fruit fly).